The following is a 320-amino-acid chain: Epoxidase atD (320 aa).

N-linked (GlcNAc...) asparagine glycosylation is found at N245 and N299.

It functions in the pathway secondary metabolite biosynthesis. Functionally, epoxidase; part of the gene cluster that mediates the biosynthesis of terreic acid, a quinone epoxide inhibitor of Bruton's tyrosine kinase. The first step of the pathway is the synthesis of 6-methylsalicylic acid (6-MSA) by the 6-methylsalicylic acid synthase atX. In the biosynthesis of 6-MSA, atX utilizes one acetyl-CoA and three malonyl-CoAs as its substrates and catalyzes a series of programmed reactions including Claisen condensation, reduction, aldol cyclization, and the hydrolytic cleavage that yields 6-MSA. The 6-methylsalicylate 1-monooxygenase atA then catalyzes the decarboxylative hydroxylation of 6-MSA to 3-methylcatechol. The next step is the conversion of 3-methylcatechol to 3-methyl-1,2,4-benzenetriol by cytochrome P450 monooxygenase atE, which is enhanced by cytochrome P450 monooxygenase atG. Then, the epoxidase atD catalyzes the epoxidation and hydroxyl oxidation of 3-methyl-1,2,4-benzenetriol to terremutin. Lastly, GMC oxidoreductase atC oxidizes terremutin to terreic acid. The polypeptide is Epoxidase atD (Aspergillus terreus (strain NIH 2624 / FGSC A1156)).